The primary structure comprises 371 residues: MLLYLLITCLSFFFFSKSLSFPQWASKTKNLLSFYFSKYLFTNSLHQITPDLASPVLGKMSILDLPDLPLDCILELLPPSELCTMARVCSSLRERCVSDHLWEKHLKTKWGKILGPSAHKEWQCYLSSPYHLDSPHHKTSHLGLAKIISLMRSLSSIFRDDDHRRRYPSSIPLDSTMNFYLSLETGRFWFPAQVYNRENGHVGFMLSCYDAELSYDTDTNTFQARYPPHGKRAIAVEKDVTWERIRAAPVDASPHNLYVSDSLNELKPGDHIEIQWRRNKEFPYGWWYSVVGHMESCDGNLNHCQCHNSEMMVLEFNQYTVGSRWRKTMINRRDHREKGNEEDGFYGGIRKINCKEDIEMWKRLWPSSILE.

In terms of domain architecture, F-box spans Lys-59–His-105.

This Arabidopsis thaliana (Mouse-ear cress) protein is F-box protein At2g26850.